A 292-amino-acid polypeptide reads, in one-letter code: ATP synthase gamma chain (292 aa).

Belongs to the ATPase gamma chain family. In terms of assembly, F-type ATPases have 2 components, CF(1) - the catalytic core - and CF(0) - the membrane proton channel. CF(1) has five subunits: alpha(3), beta(3), gamma(1), delta(1), epsilon(1). CF(0) has three main subunits: a, b and c.

The protein localises to the cell inner membrane. Produces ATP from ADP in the presence of a proton gradient across the membrane. The gamma chain is believed to be important in regulating ATPase activity and the flow of protons through the CF(0) complex. This Methylobacterium nodulans (strain LMG 21967 / CNCM I-2342 / ORS 2060) protein is ATP synthase gamma chain.